Reading from the N-terminus, the 540-residue chain is Sterol 14-alpha demethylase (540 aa).

Residues 41-61 (PLFLVSGFLGVCVAYAVANII) form a helical membrane-spanning segment. C485 serves as a coordination point for heme.

Belongs to the cytochrome P450 family. Requires heme as cofactor.

It localises to the membrane. The enzyme catalyses a 14alpha-methyl steroid + 3 reduced [NADPH--hemoprotein reductase] + 3 O2 = a Delta(14) steroid + formate + 3 oxidized [NADPH--hemoprotein reductase] + 4 H2O + 4 H(+). The catalysed reaction is a 14alpha-methyl steroid + reduced [NADPH--hemoprotein reductase] + O2 = a 14alpha-hydroxymethyl steroid + oxidized [NADPH--hemoprotein reductase] + H2O + H(+). It carries out the reaction a 14alpha-hydroxymethyl steroid + reduced [NADPH--hemoprotein reductase] + O2 = a 14alpha-formyl steroid + oxidized [NADPH--hemoprotein reductase] + 2 H2O + H(+). It catalyses the reaction a 14alpha-formyl steroid + reduced [NADPH--hemoprotein reductase] + O2 = a Delta(14) steroid + formate + oxidized [NADPH--hemoprotein reductase] + H2O + 2 H(+). The enzyme catalyses lanosterol + 3 reduced [NADPH--hemoprotein reductase] + 3 O2 = 4,4-dimethyl-5alpha-cholesta-8,14,24-trien-3beta-ol + formate + 3 oxidized [NADPH--hemoprotein reductase] + 4 H2O + 4 H(+). The catalysed reaction is lanosterol + reduced [NADPH--hemoprotein reductase] + O2 = 32-hydroxylanosterol + oxidized [NADPH--hemoprotein reductase] + H2O + H(+). It carries out the reaction 32-hydroxylanosterol + reduced [NADPH--hemoprotein reductase] + O2 = 32-oxolanosterol + oxidized [NADPH--hemoprotein reductase] + 2 H2O + H(+). It catalyses the reaction 32-oxolanosterol + reduced [NADPH--hemoprotein reductase] + O2 = 4,4-dimethyl-5alpha-cholesta-8,14,24-trien-3beta-ol + formate + oxidized [NADPH--hemoprotein reductase] + H2O + 2 H(+). The enzyme catalyses eburicol + 3 reduced [NADPH--hemoprotein reductase] + 3 O2 = 14-demethyleburicol + formate + 3 oxidized [NADPH--hemoprotein reductase] + 4 H2O + 4 H(+). The catalysed reaction is eburicol + reduced [NADPH--hemoprotein reductase] + O2 = 32-hydroxyeburicol + oxidized [NADPH--hemoprotein reductase] + H2O + H(+). It carries out the reaction 32-hydroxyeburicol + reduced [NADPH--hemoprotein reductase] + O2 = 32-oxoeburicol + oxidized [NADPH--hemoprotein reductase] + 2 H2O + H(+). It catalyses the reaction 32-oxoeburicol + reduced [NADPH--hemoprotein reductase] + O2 = 14-demethyleburicol + formate + oxidized [NADPH--hemoprotein reductase] + H2O + 2 H(+). It functions in the pathway steroid biosynthesis; sterol biosynthesis. In terms of biological role, sterol 14-alpha demethylase; part of the gene cluster that mediates the biosynthesis of tetrahydropyranyl antifungal agent lanomycin that acts as an inhibitor of CYP51 and blocks the ergosterol biosynthesis. Sterol 14-alpha-demethylase plays a critical role in the biosynthesis of ergosterol, the major sterol component in fungal membranes that participates in a variety of functions. Acts as a self-resistant CYP51 that contains mutations found in CYP51s isolated from azole resistance strains and that is not inhibited by the final product of the cluster, lanomycin. The chain is Sterol 14-alpha demethylase from Pyrenophora dematioidea (Helminthosporium dematioideum).